A 1366-amino-acid polypeptide reads, in one-letter code: DNA-directed RNA polymerase subunit beta'' (1366 aa).

C220, C290, C297, and C300 together coordinate Zn(2+).

Belongs to the RNA polymerase beta' chain family. RpoC2 subfamily. In plastids the minimal PEP RNA polymerase catalytic core is composed of four subunits: alpha, beta, beta', and beta''. When a (nuclear-encoded) sigma factor is associated with the core the holoenzyme is formed, which can initiate transcription. It depends on Zn(2+) as a cofactor.

The protein localises to the plastid. The protein resides in the chloroplast. It carries out the reaction RNA(n) + a ribonucleoside 5'-triphosphate = RNA(n+1) + diphosphate. Functionally, DNA-dependent RNA polymerase catalyzes the transcription of DNA into RNA using the four ribonucleoside triphosphates as substrates. The sequence is that of DNA-directed RNA polymerase subunit beta'' from Lemna minor (Common duckweed).